Reading from the N-terminus, the 238-residue chain is Triosephosphate isomerase (238 aa).

7–9 (NFK) contributes to the substrate binding site. Residue His91 is the Electrophile of the active site. Glu158 functions as the Proton acceptor in the catalytic mechanism. Substrate-binding residues include Gly164 and Ser200.

This sequence belongs to the triosephosphate isomerase family. As to quaternary structure, homodimer.

Its subcellular location is the cytoplasm. It catalyses the reaction D-glyceraldehyde 3-phosphate = dihydroxyacetone phosphate. It participates in carbohydrate biosynthesis; gluconeogenesis. Its pathway is carbohydrate degradation; glycolysis; D-glyceraldehyde 3-phosphate from glycerone phosphate: step 1/1. Involved in the gluconeogenesis. Catalyzes stereospecifically the conversion of dihydroxyacetone phosphate (DHAP) to D-glyceraldehyde-3-phosphate (G3P). In Ureaplasma parvum serovar 3 (strain ATCC 27815 / 27 / NCTC 11736), this protein is Triosephosphate isomerase.